We begin with the raw amino-acid sequence, 301 residues long: MEDLYSIHPGISRVGGAASEASGVGVVVGGGGGSSSSDLTELMKAQIAGHPRYPTLLSAYIECRKVGAPPEVASLLKEIGRERRAGGGGGGAGQIGVDPELDEFMEAYCRVLVRYKEELSRPFDEAASFLSSIQTQLSNLCSGATSPPATTATHSDEMVGSSDEDQCSGETDMLDIGQEQSSRLADHELKEMLLKKYSGCLSRLRSEFLKKRKKGKLPKDARSALLEWWNTHYRWPYPTEEDKLRLAARTGLDPKQINNWFINQRKRHWKPSDGMRFALMEGVAGGSSGTTLYFDTGTIGP.

The tract at residues 141-170 is disordered; it reads CSGATSPPATTATHSDEMVGSSDEDQCSGE. Residues 144–153 show a composition bias toward low complexity; it reads ATSPPATTAT. The ELK domain maps to 188–208; the sequence is ELKEMLLKKYSGCLSRLRSEF. A DNA-binding region (homeobox; TALE-type) is located at residues 209–272; the sequence is LKKRKKGKLP…NQRKRHWKPS (64 aa).

This sequence belongs to the TALE/KNOX homeobox family.

The protein resides in the nucleus. In terms of biological role, probable transcription factor that may be involved in shoot formation during early embryogenesis. This chain is Homeobox protein knotted-1-like 1 (OSH6), found in Oryza sativa subsp. japonica (Rice).